The primary structure comprises 70 residues: Small integral membrane protein 42 (70 aa).

A helical membrane pass occupies residues 26-46; sequence LVNVLFFFTPLMTLVTLLILV.

Its subcellular location is the membrane. The polypeptide is Small integral membrane protein 42 (Homo sapiens (Human)).